Reading from the N-terminus, the 199-residue chain is Peroxiredoxin-1 (199 aa).

The residue at position 2 (Ser-2) is an N-acetylserine. In terms of domain architecture, Thioredoxin spans 6-165; it reads AKIGYPAPNF…ILRLVQAFQF (160 aa). Position 7 is an N6-acetyllysine; alternate (Lys-7). Residue Lys-7 forms a Glycyl lysine isopeptide (Lys-Gly) (interchain with G-Cter in SUMO2); alternate linkage. Lys-16 carries the N6-acetyllysine modification. Ser-32 bears the Phosphoserine mark. The active-site Cysteine sulfenic acid (-SOH) intermediate is Cys-52. Thr-90 is subject to Phosphothreonine. Lys-120 participates in a covalent cross-link: Glycyl lysine isopeptide (Lys-Gly) (interchain with G-Cter in SUMO2). The residue at position 136 (Lys-136) is an N6-acetyllysine. Residues 176–199 form a disordered region; it reads GWKPGSDTIKPDVQKSKEYFSKQK. Residues 184–199 show a composition bias toward basic and acidic residues; the sequence is IKPDVQKSKEYFSKQK. Residue Lys-185 forms a Glycyl lysine isopeptide (Lys-Gly) (interchain with G-Cter in SUMO1) linkage. Position 197 is an N6-acetyllysine (Lys-197).

This sequence belongs to the peroxiredoxin family. AhpC/Prx1 subfamily. As to quaternary structure, homodimer; disulfide-linked, upon oxidation. 5 homodimers assemble to form a ring-like decamer. Interacts with GDPD5; forms a mixed-disulfide with GDPD5. Interacts with SESN1 and SESN2. Interacts with FAM107A. Phosphorylated on Thr-90 during the M-phase, which leads to a decrease in enzymatic activity. In terms of processing, acetylation increases reducing activity and resistance to superoxidation. Deacetylated by HDAC6 which decreases reducing activity.

The protein localises to the cytoplasm. It catalyses the reaction a hydroperoxide + [thioredoxin]-dithiol = an alcohol + [thioredoxin]-disulfide + H2O. Its function is as follows. Thiol-specific peroxidase that catalyzes the reduction of hydrogen peroxide and organic hydroperoxides to water and alcohols, respectively. Plays a role in cell protection against oxidative stress by detoxifying peroxides and as sensor of hydrogen peroxide-mediated signaling events. Might participate in the signaling cascades of growth factors and tumor necrosis factor-alpha by regulating the intracellular concentrations of H(2)O(2). Reduces an intramolecular disulfide bond in GDPD5 that gates the ability to GDPD5 to drive postmitotic motor neuron differentiation. The sequence is that of Peroxiredoxin-1 (PRDX1) from Cricetulus griseus (Chinese hamster).